Consider the following 421-residue polypeptide: Thymidine phosphorylase (421 aa).

This sequence belongs to the thymidine/pyrimidine-nucleoside phosphorylase family. Homodimer.

The catalysed reaction is thymidine + phosphate = 2-deoxy-alpha-D-ribose 1-phosphate + thymine. Functionally, the enzymes which catalyze the reversible phosphorolysis of pyrimidine nucleosides are involved in the degradation of these compounds and in their utilization as carbon and energy sources, or in the rescue of pyrimidine bases for nucleotide synthesis. The chain is Thymidine phosphorylase (deoA) from Mycoplasma pneumoniae (strain ATCC 29342 / M129 / Subtype 1) (Mycoplasmoides pneumoniae).